Reading from the N-terminus, the 357-residue chain is MATTVPDGCRNGLKSKYYRLCDKAEAWGIVLETVATAGVVTSVAFMLTLPILVCKVQDSNRRKMLPTQFLFLLGVLGIFGLTFAFIIGLDGSTGPTRFFLFGILFSICFSCLLAHAVSLTKLVRGRKPLSLLVILGLAVGFSLVQDVIAIEYIVLTMNRTNVNVFSELSAPRRNEDFVLLLTYVLFLMALTFLMSSFTFCGSFTGWKRHGAHIYLTMLLSIAIWVAWITLLMLPDFDRRWDDTILSSALAANGWVFLLAYVSPEFWLLTKQRNPMDYPVEDAFCKPQLVKKSYGVENRAYSQEEITQGFEETGDTLYAPYSTHFQLQNQPPQKEFSIPRAHAWPSPYKDYEVKKEGS.

Residues 1–33 (MATTVPDGCRNGLKSKYYRLCDKAEAWGIVLET) lie on the Extracellular side of the membrane. Residues 34–54 (VATAGVVTSVAFMLTLPILVC) traverse the membrane as a helical segment. Residues 55–68 (KVQDSNRRKMLPTQ) lie on the Cytoplasmic side of the membrane. The helical transmembrane segment at 69 to 89 (FLFLLGVLGIFGLTFAFIIGL) threads the bilayer. The Extracellular segment spans residues 90 to 97 (DGSTGPTR). The helical transmembrane segment at 98 to 118 (FFLFGILFSICFSCLLAHAVS) threads the bilayer. Topologically, residues 119-129 (LTKLVRGRKPL) are cytoplasmic. The chain crosses the membrane as a helical span at residues 130–150 (SLLVILGLAVGFSLVQDVIAI). Residues 151–176 (EYIVLTMNRTNVNVFSELSAPRRNED) lie on the Extracellular side of the membrane. N-linked (GlcNAc...) asparagine glycosylation occurs at Asn158. A helical membrane pass occupies residues 177 to 197 (FVLLLTYVLFLMALTFLMSSF). The Cytoplasmic portion of the chain corresponds to 198-212 (TFCGSFTGWKRHGAH). Residues 213–233 (IYLTMLLSIAIWVAWITLLML) form a helical membrane-spanning segment. Over 234–247 (PDFDRRWDDTILSS) the chain is Extracellular. The chain crosses the membrane as a helical span at residues 248–268 (ALAANGWVFLLAYVSPEFWLL). The Cytoplasmic portion of the chain corresponds to 269-357 (TKQRNPMDYP…KDYEVKKEGS (89 aa)). Ser301 is modified (phosphoserine). Tyr317 and Tyr320 each carry phosphotyrosine. Ser345 bears the Phosphoserine mark. Tyr347 and Tyr350 each carry phosphotyrosine.

The protein belongs to the G-protein coupled receptor 3 family. In terms of assembly, interacts (via its transmembrane domain) with EGFR. In terms of processing, phosphorylated in two conserved double-tyrosine motifs, Tyr-317/Tyr-320 and Tyr-347/Tyr-350, by EGFR; leading to inactivation of the tumor suppressive function of GPRC5A in lung cancer cells. Tyr-317 and Tyr-320 are the preferred residues responsible for EGFR-mediated GPRC5A phosphorylation. In terms of tissue distribution, expressed at high level in fetal and adult lung tissues but repressed in most human lung cancers. Constitutively expressed in fetal kidney and adult placenta, kidney, prostate, testis, ovary, small intestine, colon, stomach, and spinal cord at low to moderate levels. Not detectable in fetal heart, brain, and liver and adult heart, brain, liver, skeletal muscle, pancreas, spleen, thymus, and peripheral leukocytes. According to PubMed:10783259, expressed at low but detectable level in pancreas and heart.

The protein resides in the cell membrane. Its subcellular location is the cytoplasmic vesicle membrane. Its function is as follows. Orphan receptor. Could be involved in modulating differentiation and maintaining homeostasis of epithelial cells. This retinoic acid-inducible GPCR provide evidence for a possible interaction between retinoid and G-protein signaling pathways. Functions as a negative modulator of EGFR signaling. May act as a lung tumor suppressor. The polypeptide is Retinoic acid-induced protein 3 (GPRC5A) (Homo sapiens (Human)).